A 798-amino-acid polypeptide reads, in one-letter code: Acetyl-CoA decarbonylase/synthase complex subunit alpha 2 (798 aa).

Positions 65, 68, 69, 71, 76, and 86 each coordinate [4Fe-4S] cluster. H109 contacts CO. [Ni-4Fe-4S] cluster is bound by residues H246, C274, and C313. 4Fe-4S ferredoxin-type domains follow at residues 395-424 (EEQF…IGEA) and 434-463 (SKLE…IDMY). [4Fe-4S] cluster contacts are provided by C405, C408, C411, C415, C443, C446, C449, and C453. The [Ni-4Fe-4S] cluster site is built by C511, C540, and C575.

It belongs to the Ni-containing carbon monoxide dehydrogenase family. As to quaternary structure, heterotetramer of two alpha and two epsilon subunits. The ACDS complex is made up of alpha, epsilon, beta, gamma and delta subunits with a probable stoichiometry of (alpha(2)epsilon(2))(4)-beta(8)-(gamma(1)delta(1))(8). [4Fe-4S] cluster is required as a cofactor. It depends on [Ni-4Fe-4S] cluster as a cofactor.

The catalysed reaction is CO + 2 oxidized [2Fe-2S]-[ferredoxin] + H2O = 2 reduced [2Fe-2S]-[ferredoxin] + CO2 + 2 H(+). Part of the ACDS complex that catalyzes the reversible cleavage of acetyl-CoA, allowing autotrophic growth from CO(2). The alpha-epsilon subcomponent functions as a carbon monoxide dehydrogenase. The sequence is that of Acetyl-CoA decarbonylase/synthase complex subunit alpha 2 from Archaeoglobus fulgidus (strain ATCC 49558 / DSM 4304 / JCM 9628 / NBRC 100126 / VC-16).